The primary structure comprises 878 residues: Staphylococcal nuclease domain-containing protein 1 (878 aa).

2 TNase-like domains span residues 3 to 142 (QYVS…IWGP) and 167 to 312 (KKLN…IWKN). The residue at position 316 (S316) is a Phosphoserine. TNase-like domains follow at residues 326-464 (KDYS…MWSG) and 493-626 (RKLS…MWHD). One can recognise a Tudor domain in the interval 695-755 (KINVGMNVAA…SSLPDTYTKL (61 aa)).

The protein localises to the cytoplasm. It localises to the cytosol. This is Staphylococcal nuclease domain-containing protein 1 from Schizosaccharomyces pombe (strain 972 / ATCC 24843) (Fission yeast).